Reading from the N-terminus, the 463-residue chain is Chromosomal replication initiator protein DnaA (463 aa).

Positions 1–83 (MSTNQIILTD…LQLFQHYNNT (83 aa)) are domain I, interacts with DnaA modulators. The interval 83-124 (TIKSIEIITKELPGITQTVIALPTKTFADIGSSELNAENIFS) is domain II. Residues 125–343 (TLDVRFTFDN…GALNKVIAHS (219 aa)) are domain III, AAA+ region. Positions 171, 173, 174, and 175 each coordinate ATP. The interval 344-463 (NFTLKEITLE…INLLMKILQN (120 aa)) is domain IV, binds dsDNA.

The protein belongs to the DnaA family. As to quaternary structure, oligomerizes as a right-handed, spiral filament on DNA at oriC.

It is found in the cytoplasm. Functionally, plays an essential role in the initiation and regulation of chromosomal replication. ATP-DnaA binds to the origin of replication (oriC) to initiate formation of the DNA replication initiation complex once per cell cycle. Binds the DnaA box (a 9 base pair repeat at the origin) and separates the double-stranded (ds)DNA. Forms a right-handed helical filament on oriC DNA; dsDNA binds to the exterior of the filament while single-stranded (ss)DNA is stabiized in the filament's interior. The ATP-DnaA-oriC complex binds and stabilizes one strand of the AT-rich DNA unwinding element (DUE), permitting loading of DNA polymerase. After initiation quickly degrades to an ADP-DnaA complex that is not apt for DNA replication. Binds acidic phospholipids. This is Chromosomal replication initiator protein DnaA from Rickettsia massiliae (strain Mtu5).